A 339-amino-acid polypeptide reads, in one-letter code: Cobalt-precorrin-5B C(1)-methyltransferase (339 aa).

It belongs to the CbiD family.

It catalyses the reaction Co-precorrin-5B + S-adenosyl-L-methionine = Co-precorrin-6A + S-adenosyl-L-homocysteine. It participates in cofactor biosynthesis; adenosylcobalamin biosynthesis; cob(II)yrinate a,c-diamide from sirohydrochlorin (anaerobic route): step 6/10. In terms of biological role, catalyzes the methylation of C-1 in cobalt-precorrin-5B to form cobalt-precorrin-6A. The protein is Cobalt-precorrin-5B C(1)-methyltransferase of Methanosarcina acetivorans (strain ATCC 35395 / DSM 2834 / JCM 12185 / C2A).